The primary structure comprises 456 residues: Ribonuclease inhibitor (456 aa).

An N-acetylmethionine modification is found at Met1. 15 LRR repeats span residues 15 to 43 (WTEL…CKDI), 44 to 71 (SSAV…VGLV), 72 to 100 (LQGL…CGIL), 101 to 128 (PGML…LKLL), 129 to 157 (CEGL…CEPL), 158 to 185 (ASVL…VRIL), 186 to 214 (CQGL…CKDL), 215 to 242 (CDVV…IAAL), 243 to 271 (CPGL…CKDL), 272 to 299 (CRVL…ARLL), 300 to 328 (CESL…CPYF), 329 to 356 (CSVL…VQEL), 357 to 385 (CKAL…CSSL), 386 to 413 (ANVL…VLQL), and 414 to 442 (LESL…EEQL). Residue Ser86 is modified to Phosphoserine.

Forms high-affinity heterodimers with RNASE1, ANG and RNASE2.

It is found in the cytoplasm. It localises to the nucleus. Ribonuclease inhibitor which inhibits RNASE1, RNASE2 and angiogenin (ANG). May play a role in redox homeostasis. Required to inhibit the cytotoxic tRNA ribonuclease activity of ANG in the cytoplasm in absence of stress. Relocates to the nucleus in response to stress, relieving inhibition of ANG in the cytoplasm, and inhibiting the angiogenic activity of ANG in the nucleus. This is Ribonuclease inhibitor (Rnh1) from Mus musculus (Mouse).